Here is a 432-residue protein sequence, read N- to C-terminus: Putative D-alanyl-D-alanine carboxypeptidase (432 aa).

The helical; Signal-anchor transmembrane segment at 7-25 threads the bilayer; the sequence is ATVLLTFSLSAFAVEYPVL.

Belongs to the peptidase S12 family. YfeW subfamily.

It is found in the cell inner membrane. It carries out the reaction Preferential cleavage: (Ac)2-L-Lys-D-Ala-|-D-Ala. Also transpeptidation of peptidyl-alanyl moieties that are N-acyl substituents of D-alanine.. This is Putative D-alanyl-D-alanine carboxypeptidase from Salmonella choleraesuis (strain SC-B67).